The primary structure comprises 186 residues: Ribosome-recycling factor (186 aa).

It belongs to the RRF family.

It is found in the cytoplasm. Its function is as follows. Responsible for the release of ribosomes from messenger RNA at the termination of protein biosynthesis. May increase the efficiency of translation by recycling ribosomes from one round of translation to another. In Coprothermobacter proteolyticus (strain ATCC 35245 / DSM 5265 / OCM 4 / BT), this protein is Ribosome-recycling factor.